The chain runs to 497 residues: Sperm motility kinase Z (497 aa).

Positions 28–275 (YTVLKTLSQH…AQDLLSHPWL (248 aa)) constitute a Protein kinase domain. ATP contacts are provided by residues 34–42 (LSQHGTTEV) and K57. The active-site Proton acceptor is the D146. Residues 292-332 (FPDPDIMAAMKNIGFHVQDIRESLKHRKFDETMATYNLLRA) form the UBA domain. Disordered stretches follow at residues 383–410 (TEEH…GRSQ) and 439–460 (SSQA…SCPL).

It belongs to the protein kinase superfamily. CAMK Ser/Thr protein kinase family. Smok subfamily.

The enzyme catalyses L-seryl-[protein] + ATP = O-phospho-L-seryl-[protein] + ADP + H(+). It carries out the reaction L-threonyl-[protein] + ATP = O-phospho-L-threonyl-[protein] + ADP + H(+). May play a role in sperm motility, especially in the regulation of flagellar function. This is Sperm motility kinase Z (Gm4922) from Mus musculus (Mouse).